Reading from the N-terminus, the 465-residue chain is Cysteine--tRNA ligase (465 aa).

Residue cysteine 29 participates in Zn(2+) binding. The 'HIGH' region signature appears at 31–41 (PTVYNYIHIGN). Zn(2+) contacts are provided by cysteine 209, histidine 234, and glutamate 238. The 'KMSKS' region motif lies at 266–270 (KMSKS). Residue lysine 269 participates in ATP binding. Serine 270 is subject to Phosphoserine.

Belongs to the class-I aminoacyl-tRNA synthetase family. Monomer. It depends on Zn(2+) as a cofactor.

The protein resides in the cytoplasm. The catalysed reaction is tRNA(Cys) + L-cysteine + ATP = L-cysteinyl-tRNA(Cys) + AMP + diphosphate. This Bacillus anthracis (strain A0248) protein is Cysteine--tRNA ligase.